The chain runs to 192 residues: Peptidyl-prolyl cis-trans isomerase 1 (192 aa).

The PPIase cyclophilin-type domain maps to 25–188; sequence FFDVSIGEEP…KTVTIADCGE (164 aa).

It belongs to the cyclophilin-type PPIase family.

The catalysed reaction is [protein]-peptidylproline (omega=180) = [protein]-peptidylproline (omega=0). Its function is as follows. PPIases accelerate the folding of proteins. It catalyzes the cis-trans isomerization of proline imidic peptide bonds in oligopeptides. The protein is Peptidyl-prolyl cis-trans isomerase 1 (cyn-1) of Caenorhabditis elegans.